An 89-amino-acid chain; its full sequence is MGDVAAKLKIMPESVDTDLVGLKENLKNVIPAGAQLHGDIVEEPIAFGLKALIVTLIVNDEEGGTEPAEEAFAKVSGVENVQVLEAYRI.

This sequence belongs to the EF-1-beta/EF-1-delta family.

In terms of biological role, promotes the exchange of GDP for GTP in EF-1-alpha/GDP, thus allowing the regeneration of EF-1-alpha/GTP that could then be used to form the ternary complex EF-1-alpha/GTP/AAtRNA. This chain is Elongation factor 1-beta, found in Methanosarcina mazei (strain ATCC BAA-159 / DSM 3647 / Goe1 / Go1 / JCM 11833 / OCM 88) (Methanosarcina frisia).